The primary structure comprises 324 residues: Beta-ketoacyl-[acyl-carrier-protein] synthase III (324 aa).

Catalysis depends on residues cysteine 114 and histidine 246. Residues 247 to 251 (QANLR) are ACP-binding. Residue asparagine 276 is part of the active site.

This sequence belongs to the thiolase-like superfamily. FabH family. Homodimer.

It is found in the cytoplasm. It carries out the reaction malonyl-[ACP] + acetyl-CoA + H(+) = 3-oxobutanoyl-[ACP] + CO2 + CoA. Its pathway is lipid metabolism; fatty acid biosynthesis. In terms of biological role, catalyzes the condensation reaction of fatty acid synthesis by the addition to an acyl acceptor of two carbons from malonyl-ACP. Catalyzes the first condensation reaction which initiates fatty acid synthesis and may therefore play a role in governing the total rate of fatty acid production. Possesses both acetoacetyl-ACP synthase and acetyl transacylase activities. Its substrate specificity determines the biosynthesis of branched-chain and/or straight-chain of fatty acids. The sequence is that of Beta-ketoacyl-[acyl-carrier-protein] synthase III from Campylobacter jejuni subsp. jejuni serotype O:6 (strain 81116 / NCTC 11828).